The chain runs to 861 residues: Putative glutamate--cysteine ligase 2-2 (861 aa).

The interval 1-372 (MSDARIVAVG…RDVPPAGAAA (372 aa)) is carboxylate-amine ligase. The tract at residues 373-861 (ALGSAPAVSA…GSKDTWIPRR (489 aa)) is unknown.

This sequence in the N-terminal section; belongs to the glutamate--cysteine ligase type 2 family. YbdK subfamily.

It catalyses the reaction L-cysteine + L-glutamate + ATP = gamma-L-glutamyl-L-cysteine + ADP + phosphate + H(+). Its function is as follows. ATP-dependent carboxylate-amine ligase which exhibits weak glutamate--cysteine ligase activity. The chain is Putative glutamate--cysteine ligase 2-2 from Frankia casuarinae (strain DSM 45818 / CECT 9043 / HFP020203 / CcI3).